The chain runs to 1264 residues: Valine--tRNA ligase (1264 aa).

The residue at position 2 (Ser-2) is an N-acetylserine. Positions 89–219 constitute a GST C-terminal domain; that stretch reads GSRAAVLVQQ…YSGARPLSHQ (131 aa). Positions 217–296 are disordered; the sequence is SHQPGPEAPA…GEKKDVSGPM (80 aa). Basic and acidic residues-rich tracts occupy residues 234–248 and 261–275; these read LKKE…EKFQ and GEKK…KRDP. Positions 344 to 354 match the 'HIGH' region motif; that stretch reads PNVTGSLHLGH. Phosphoserine occurs at positions 437 and 527. Lys-645 is modified (N6-acetyllysine). Positions 862-866 match the 'KMSKS' region motif; it reads KMSKS. Lys-865 contributes to the ATP binding site.

It belongs to the class-I aminoacyl-tRNA synthetase family. As to quaternary structure, forms high-molecular-mass aggregates with elongation factor 1.

It carries out the reaction tRNA(Val) + L-valine + ATP = L-valyl-tRNA(Val) + AMP + diphosphate. Its activity is regulated as follows. Can be regulated by protein kinase C-dependent phosphorylation. In terms of biological role, catalyzes the attachment of valine to tRNA(Val). This is Valine--tRNA ligase from Homo sapiens (Human).